Reading from the N-terminus, the 436-residue chain is Phosphomethylpyrimidine synthase (436 aa).

Substrate is bound by residues N69, M98, Y127, H163, 185–187 (SRG), 226–229 (DACR), and E265. A Zn(2+)-binding site is contributed by H269. Y292 is a binding site for substrate. Residue H333 participates in Zn(2+) binding. C409, C412, and C416 together coordinate [4Fe-4S] cluster.

The protein belongs to the ThiC family. The cofactor is [4Fe-4S] cluster.

It catalyses the reaction 5-amino-1-(5-phospho-beta-D-ribosyl)imidazole + S-adenosyl-L-methionine = 4-amino-2-methyl-5-(phosphooxymethyl)pyrimidine + CO + 5'-deoxyadenosine + formate + L-methionine + 3 H(+). Its pathway is cofactor biosynthesis; thiamine diphosphate biosynthesis. Catalyzes the synthesis of the hydroxymethylpyrimidine phosphate (HMP-P) moiety of thiamine from aminoimidazole ribotide (AIR) in a radical S-adenosyl-L-methionine (SAM)-dependent reaction. The chain is Phosphomethylpyrimidine synthase from Clostridium acetobutylicum (strain ATCC 824 / DSM 792 / JCM 1419 / IAM 19013 / LMG 5710 / NBRC 13948 / NRRL B-527 / VKM B-1787 / 2291 / W).